The primary structure comprises 220 residues: Metalloproteinase inhibitor 2 (220 aa).

The first 26 residues, 1–26 (MPGAALPSLLAWLAVLLLGRARPADA), serve as a signal peptide directing secretion. Cys27 provides a ligand contact to Zn(2+). 2 involved in metalloproteinase-binding regions span residues 27 to 30 (CSCS) and 95 to 96 (TE). 6 disulfide bridges follow: Cys27/Cys98, Cys29/Cys127, Cys39/Cys152, Cys154/Cys201, Cys159/Cys164, and Cys172/Cys193. Residues 27–152 (CSCSPIHPQQ…SLNQRYQMGC (126 aa)) form the NTR domain.

It belongs to the protease inhibitor I35 (TIMP) family. The activity of TIMP2 is dependent on the presence of disulfide bonds.

It localises to the secreted. Complexes with metalloproteinases (such as collagenases) and irreversibly inactivates them by binding to their catalytic zinc cofactor. The chain is Metalloproteinase inhibitor 2 (TIMP2) from Gallus gallus (Chicken).